Here is a 261-residue protein sequence, read N- to C-terminus: MILDEILKKTREDLKRRKKMLSFELLGRSLSANPYMPRDVIKALKSTPNEPFKLICEIKKASPSKGVIREYFKPVEIAREYEKAGADAFSVLTEPHFFKGDLEFISQIRRYTKMPILRKDFIIDEYQILEALVYGADFVLLIAKALSLKELKKLLEFTHHIGLEALVEVHDKKDLLNATLSGANIIGINHRDLNDFSLHMNLAEELVPLIPNGKIIVAESGLNSREQLVNLNKVGVDAFLIGEHFMRQNDICAAVREMKGV.

It belongs to the TrpC family.

It catalyses the reaction 1-(2-carboxyphenylamino)-1-deoxy-D-ribulose 5-phosphate + H(+) = (1S,2R)-1-C-(indol-3-yl)glycerol 3-phosphate + CO2 + H2O. It functions in the pathway amino-acid biosynthesis; L-tryptophan biosynthesis; L-tryptophan from chorismate: step 4/5. This is Indole-3-glycerol phosphate synthase from Campylobacter hominis (strain ATCC BAA-381 / DSM 21671 / CCUG 45161 / LMG 19568 / NCTC 13146 / CH001A).